The sequence spans 496 residues: Cobyric acid synthase (496 aa).

The GATase cobBQ-type domain maps to Thr258 to Leu427. The active-site Nucleophile is the Cys339. His419 is an active-site residue.

This sequence belongs to the CobB/CobQ family. CobQ subfamily.

Its pathway is cofactor biosynthesis; adenosylcobalamin biosynthesis. Functionally, catalyzes amidations at positions B, D, E, and G on adenosylcobyrinic A,C-diamide. NH(2) groups are provided by glutamine, and one molecule of ATP is hydrogenolyzed for each amidation. This Mycolicibacterium smegmatis (strain ATCC 700084 / mc(2)155) (Mycobacterium smegmatis) protein is Cobyric acid synthase.